The following is a 158-amino-acid chain: MTLKTIEGTFIAPKGRYALVVGRFNSFVVESLVSGAVDALVRHGVSESDITIIRAPGAFEIPLVAQKVAQQGAYDAIIALGAVIRGGTPHFEYVAGECTKGLAQVSMEFGVPVAFGVLTVDSIEQAIERSGTKAGNKGAEAALSALEMVSLLAQLEAK.

5-amino-6-(D-ribitylamino)uracil-binding positions include Phe-24, 58–60 (AFE), and 82–84 (AVI). 87–88 (GT) is a (2S)-2-hydroxy-3-oxobutyl phosphate binding site. His-90 (proton donor) is an active-site residue. 5-amino-6-(D-ribitylamino)uracil is bound at residue Phe-115. Arg-129 provides a ligand contact to (2S)-2-hydroxy-3-oxobutyl phosphate.

It belongs to the DMRL synthase family. As to quaternary structure, forms an icosahedral capsid composed of 60 subunits, arranged as a dodecamer of pentamers.

It carries out the reaction (2S)-2-hydroxy-3-oxobutyl phosphate + 5-amino-6-(D-ribitylamino)uracil = 6,7-dimethyl-8-(1-D-ribityl)lumazine + phosphate + 2 H2O + H(+). It functions in the pathway cofactor biosynthesis; riboflavin biosynthesis; riboflavin from 2-hydroxy-3-oxobutyl phosphate and 5-amino-6-(D-ribitylamino)uracil: step 1/2. Catalyzes the formation of 6,7-dimethyl-8-ribityllumazine by condensation of 5-amino-6-(D-ribitylamino)uracil with 3,4-dihydroxy-2-butanone 4-phosphate. This is the penultimate step in the biosynthesis of riboflavin. In Pseudomonas putida (strain GB-1), this protein is 6,7-dimethyl-8-ribityllumazine synthase.